Consider the following 277-residue polypeptide: Small ribosomal subunit protein uS5 (277 aa).

Residues 18-40 are disordered; the sequence is AAGRPSWSWQRPGERARTPGRKA. Positions 29 to 40 are enriched in basic and acidic residues; it reads PGERARTPGRKA. Residues 87 to 150 form the S5 DRBM domain; that stretch reads LKDEVLKIMP…ILAKLSIIPV (64 aa).

The protein belongs to the universal ribosomal protein uS5 family. Component of the small ribosomal subunit.

The protein localises to the cytoplasm. Its subcellular location is the nucleus. The protein resides in the nucleolus. In terms of biological role, component of the ribosome, a large ribonucleoprotein complex responsible for the synthesis of proteins in the cell. The small ribosomal subunit (SSU) binds messenger RNAs (mRNAs) and translates the encoded message by selecting cognate aminoacyl-transfer RNA (tRNA) molecules. The large subunit (LSU) contains the ribosomal catalytic site termed the peptidyl transferase center (PTC), which catalyzes the formation of peptide bonds, thereby polymerizing the amino acids delivered by tRNAs into a polypeptide chain. The nascent polypeptides leave the ribosome through a tunnel in the LSU and interact with protein factors that function in enzymatic processing, targeting, and the membrane insertion of nascent chains at the exit of the ribosomal tunnel. Plays a role in the assembly and function of the 40S ribosomal subunit. Mutations in this protein affects the control of translational fidelity. Involved in nucleolar processing of pre-18S ribosomal RNA and ribosome assembly. In Ictalurus punctatus (Channel catfish), this protein is Small ribosomal subunit protein uS5 (rps2).